The primary structure comprises 377 residues: Succinyl-diaminopimelate desuccinylase (377 aa).

His-66 is a binding site for Zn(2+). Asp-68 is a catalytic residue. Asp-99 lines the Zn(2+) pocket. Glu-133 acts as the Proton acceptor in catalysis. Positions 134, 162, and 348 each coordinate Zn(2+).

It belongs to the peptidase M20A family. DapE subfamily. In terms of assembly, homodimer. Requires Zn(2+) as cofactor. Co(2+) is required as a cofactor.

The enzyme catalyses N-succinyl-(2S,6S)-2,6-diaminopimelate + H2O = (2S,6S)-2,6-diaminopimelate + succinate. It participates in amino-acid biosynthesis; L-lysine biosynthesis via DAP pathway; LL-2,6-diaminopimelate from (S)-tetrahydrodipicolinate (succinylase route): step 3/3. Functionally, catalyzes the hydrolysis of N-succinyl-L,L-diaminopimelic acid (SDAP), forming succinate and LL-2,6-diaminopimelate (DAP), an intermediate involved in the bacterial biosynthesis of lysine and meso-diaminopimelic acid, an essential component of bacterial cell walls. This is Succinyl-diaminopimelate desuccinylase from Marinomonas sp. (strain MWYL1).